Reading from the N-terminus, the 167-residue chain is HTH-type transcriptional repressor IacR (167 aa).

Polar residues predominate over residues 1-10 (MSNAKNTSAA). Residues 1-25 (MSNAKNTSAASPARKGHSHHDPASD) form a disordered region. Positions 30-162 (EDFPFYWLAR…LNRMLEVVFH (133 aa)) constitute an HTH marR-type domain. A DNA-binding region (H-T-H motif) is located at residues 76-99 (ISEISTHAIAKLSTITKIVYRMKE).

With respect to regulation, exposure to indole-3-acetic acid (IAA) probably relieves the repressor activity. Its function is as follows. Probably acts as a repressor of iacA expression. The chain is HTH-type transcriptional repressor IacR from Pseudomonas putida (Arthrobacter siderocapsulatus).